Here is a 155-residue protein sequence, read N- to C-terminus: Endoribonuclease YbeY (155 aa).

Zn(2+) contacts are provided by histidine 114, histidine 118, and histidine 124.

This sequence belongs to the endoribonuclease YbeY family. It depends on Zn(2+) as a cofactor.

Its subcellular location is the cytoplasm. Single strand-specific metallo-endoribonuclease involved in late-stage 70S ribosome quality control and in maturation of the 3' terminus of the 16S rRNA. The protein is Endoribonuclease YbeY of Escherichia coli O1:K1 / APEC.